A 187-amino-acid chain; its full sequence is dCTP deaminase (187 aa).

Residues Lys107–Arg112, Thr131–Glu133, Gln152, Tyr166, Lys175, and Gln176 each bind dCTP. The active-site Proton donor/acceptor is Glu133.

The protein belongs to the dCTP deaminase family. As to quaternary structure, homotrimer.

It carries out the reaction dCTP + H2O + H(+) = dUTP + NH4(+). It participates in pyrimidine metabolism; dUMP biosynthesis; dUMP from dCTP (dUTP route): step 1/2. Functionally, catalyzes the deamination of dCTP to dUTP. In Ehrlichia canis (strain Jake), this protein is dCTP deaminase.